Reading from the N-terminus, the 364-residue chain is Aminomethyltransferase (364 aa).

The protein belongs to the GcvT family. As to quaternary structure, the glycine cleavage system is composed of four proteins: P, T, L and H.

It catalyses the reaction N(6)-[(R)-S(8)-aminomethyldihydrolipoyl]-L-lysyl-[protein] + (6S)-5,6,7,8-tetrahydrofolate = N(6)-[(R)-dihydrolipoyl]-L-lysyl-[protein] + (6R)-5,10-methylene-5,6,7,8-tetrahydrofolate + NH4(+). In terms of biological role, the glycine cleavage system catalyzes the degradation of glycine. In Geobacillus kaustophilus (strain HTA426), this protein is Aminomethyltransferase.